The sequence spans 71 residues: UPF0346 protein MGAS2096_Spy0401 (71 aa).

This sequence belongs to the UPF0346 family.

This Streptococcus pyogenes serotype M12 (strain MGAS2096) protein is UPF0346 protein MGAS2096_Spy0401.